The primary structure comprises 451 residues: Signal transduction histidine-protein kinase ArlS (451 aa).

2 helical membrane passes run 11–31 (IIVTTMITFVTIFLFCLIIIF) and 156–176 (IIALAFGVIATIITATISYVF). In terms of domain architecture, HAMP spans 178–231 (TQITKPLVSLSNKMIEIRRDGFQNKLQLNTNYEEIDNLANTFNEMMSQIEESFN). The 213-residue stretch at 239 to 451 (DASHELRTPL…NKGTTFKIIF (213 aa)) folds into the Histidine kinase domain. His-242 bears the Phosphohistidine; by autocatalysis mark.

In terms of processing, autophosphorylated.

The protein localises to the cell membrane. It carries out the reaction ATP + protein L-histidine = ADP + protein N-phospho-L-histidine.. In terms of biological role, member of the two-component regulatory system ArlS/ArlR involved in the regulation of adhesion, autolysis, multidrug resistance and virulence. ArlS probably functions as a sensor protein kinase which is autophosphorylated at a histidine residue and transfers its phosphate group to ArlR. The chain is Signal transduction histidine-protein kinase ArlS (arlS) from Staphylococcus aureus (strain MRSA252).